A 199-amino-acid chain; its full sequence is NAD(P)H dehydrogenase (quinone) (199 aa).

Residues 4 to 190 (VLVLYYSAYG…GGARYQGKVI (187 aa)) enclose the Flavodoxin-like domain. FMN-binding positions include 10-15 (SAYGHI) and 78-80 (TRF). Tyr12 lines the NAD(+) pocket. Substrate is bound at residue Trp98. FMN is bound by residues 113-119 (STASQHG) and His134.

It belongs to the WrbA family. It depends on FMN as a cofactor.

The enzyme catalyses a quinone + NADH + H(+) = a quinol + NAD(+). The catalysed reaction is a quinone + NADPH + H(+) = a quinol + NADP(+). This chain is NAD(P)H dehydrogenase (quinone), found in Rhodopseudomonas palustris (strain BisB18).